A 1063-amino-acid chain; its full sequence is E3 ubiquitin-protein ligase PDZRN3 (1063 aa).

The segment at 18 to 56 (CALCHKVLEDPLTTPCGHVFCAGCVLPWVVQEGSCPARC) adopts an RING-type; degenerate zinc-finger fold. The TRAF-type zinc finger occupies 100 to 158 (EHLERCDFAPARCRHAGCGQLLLRRDVEAHMRDACDARPVGRCQEGCGLPLTHGEQRAG). PDZ domains are found at residues 249–339 (TLVL…LRRT) and 419–503 (EVGL…IARP). At S427 the chain carries Phosphoserine. Positions 545–602 (QKKHEEDGGTTDTATILSNQHEKDSGVGRTDESTRNDESSEQENNGEDATASANPLAG) are disordered. Positions 554 to 563 (TTDTATILSN) are enriched in polar residues. Basic and acidic residues predominate over residues 564–582 (QHEKDSGVGRTDESTRNDE). Positions 680-705 (ESVDKELELLNEELRSIELECLSIVR) form a coiled coil. The segment covering 746–755 (ELPEKSDKDS) has biased composition (basic and acidic residues). Disordered regions lie at residues 746 to 798 (ELPE…IEAY) and 834 to 853 (IKER…PKLG). Residues 756-770 (SSAYNTGESCRSTPL) are compositionally biased toward polar residues.

In terms of assembly, interacts with NLGN1 and EFNB2. Interacts with UBE2D2 and with MUSK via the first PDZ domain. In myotubes, the interaction between PDZRN3 and MUSK is enhanced upon agrin stimulation. In terms of processing, auto-ubiquitinated. Highly expressed in skeletal and cardiac muscle and at lower levels in spinal cord and brain (at protein level). Also expressed in kidney and lung. In muscles, concentrated at the neuromuscular junction (NMJ).

The protein resides in the synapse. Its subcellular location is the cytoplasm. The catalysed reaction is S-ubiquitinyl-[E2 ubiquitin-conjugating enzyme]-L-cysteine + [acceptor protein]-L-lysine = [E2 ubiquitin-conjugating enzyme]-L-cysteine + N(6)-ubiquitinyl-[acceptor protein]-L-lysine.. It participates in protein modification; protein ubiquitination. Functionally, E3 ubiquitin-protein ligase. Plays an important role in regulating the surface level of MUSK on myotubes. Mediates the ubiquitination of MUSK, promoting its endocytosis and lysosomal degradation. Might contribute to terminal myogenic differentiation. This is E3 ubiquitin-protein ligase PDZRN3 (Pdzrn3) from Mus musculus (Mouse).